The primary structure comprises 335 residues: uncharacterized protein (335 aa).

The region spanning 21-258 (VMTSDLRKVY…QNTYHVQGQN (238 aa)) is the ABC transporter domain. 60 to 67 (GPNGAGKT) is a binding site for ATP.

This sequence belongs to the ABC transporter superfamily.

This is an uncharacterized protein from Nostoc sp. (strain PCC 7120 / SAG 25.82 / UTEX 2576).